A 313-amino-acid chain; its full sequence is Homoserine O-acetyltransferase (313 aa).

Cys142 (acyl-thioester intermediate) is an active-site residue. 2 residues coordinate substrate: Lys163 and Ser191. His234 serves as the catalytic Proton acceptor. Glu236 is a catalytic residue. Arg248 is a binding site for substrate.

This sequence belongs to the MetA family.

It localises to the cytoplasm. It catalyses the reaction L-homoserine + acetyl-CoA = O-acetyl-L-homoserine + CoA. It participates in amino-acid biosynthesis; L-methionine biosynthesis via de novo pathway; O-acetyl-L-homoserine from L-homoserine: step 1/1. Transfers an acetyl group from acetyl-CoA to L-homoserine, forming acetyl-L-homoserine. The chain is Homoserine O-acetyltransferase from Streptococcus sanguinis (strain SK36).